A 365-amino-acid chain; its full sequence is 3-dehydroquinate synthase (365 aa).

Residues 69-74, 103-107, 127-128, K140, and K149 contribute to the NAD(+) site; these read DGEKYK, GVIGD, and TT. Residues E182, H245, and H262 each coordinate Zn(2+).

This sequence belongs to the sugar phosphate cyclases superfamily. Dehydroquinate synthase family. The cofactor is Co(2+). Requires Zn(2+) as cofactor. NAD(+) is required as a cofactor.

It localises to the cytoplasm. It catalyses the reaction 7-phospho-2-dehydro-3-deoxy-D-arabino-heptonate = 3-dehydroquinate + phosphate. It participates in metabolic intermediate biosynthesis; chorismate biosynthesis; chorismate from D-erythrose 4-phosphate and phosphoenolpyruvate: step 2/7. In terms of biological role, catalyzes the conversion of 3-deoxy-D-arabino-heptulosonate 7-phosphate (DAHP) to dehydroquinate (DHQ). This is 3-dehydroquinate synthase from Pseudomonas entomophila (strain L48).